The following is a 218-amino-acid chain: Very-long-chain (3R)-3-hydroxyacyl-CoA dehydratase hpo-8 (218 aa).

The next 5 helical transmembrane spans lie at 15-35, 44-64, 86-106, 137-157, and 176-196; these read ILGWSAILVKTVLGLANGLTW, FELKIFQTAAILEVIHAIVGL, ILHLCSTARFSIGVPLLLVAW, LFYVLYPMGVSGELLTLFASL, and MGISFWWVLIIAALSYIPGFP. Active-site residues include Tyr-142 and Glu-149.

It belongs to the very long-chain fatty acids dehydratase HACD family.

Its subcellular location is the membrane. It catalyses the reaction a very-long-chain (3R)-3-hydroxyacyl-CoA = a very-long-chain (2E)-enoyl-CoA + H2O. Its pathway is lipid metabolism; fatty acid biosynthesis. Catalyzes the third of the four reactions of the long-chain fatty acids elongation cycle. This endoplasmic reticulum-bound enzymatic process, allows the addition of two carbons to the chain of long- and very long-chain fatty acids/VLCFAs per cycle. This enzyme catalyzes the dehydration of the 3-hydroxyacyl-CoA intermediate into trans-2,3-enoyl-CoA, within each cycle of fatty acid elongation. Thereby, it participates in the production of VLCFAs of different chain lengths that are involved in multiple biological processes as precursors of membrane lipids and lipid mediators. The sequence is that of Very-long-chain (3R)-3-hydroxyacyl-CoA dehydratase hpo-8 (hpo-8) from Caenorhabditis elegans.